A 122-amino-acid polypeptide reads, in one-letter code: Large ribosomal subunit protein uL14 (122 aa).

Belongs to the universal ribosomal protein uL14 family. As to quaternary structure, part of the 50S ribosomal subunit. Forms a cluster with proteins L3 and L19. In the 70S ribosome, L14 and L19 interact and together make contacts with the 16S rRNA in bridges B5 and B8.

Its function is as follows. Binds to 23S rRNA. Forms part of two intersubunit bridges in the 70S ribosome. This Brachyspira hyodysenteriae (strain ATCC 49526 / WA1) protein is Large ribosomal subunit protein uL14.